The chain runs to 740 residues: ATP-dependent RNA helicase DDX1 (740 aa).

The segment at 1 to 295 (MAAFSEMGVM…APKALIVEPS (295 aa)) is necessary for interaction with HNRNPK. The interval 1 to 448 (MAAFSEMGVM…DTVHHVVVPV (448 aa)) is interaction with dsRNA. The tract at residues 1–525 (MAAFSEMGVM…KIDCDNLEQY (525 aa)) is necessary for interaction with RELA. The region spanning 2–428 (AAFSEMGVMP…SEKIMHFPTW (427 aa)) is the Helicase ATP-binding domain. 46–53 (AETGSGKT) lines the ATP pocket. Residues 70-247 (DQQEGKKGKA…LKFNFGEEEF (178 aa)) enclose the B30.2/SPRY domain. N6-acetyllysine is present on residues Lys239 and Lys268. N6-acetyllysine; alternate is present on Lys281. A Glycyl lysine isopeptide (Lys-Gly) (interchain with G-Cter in SUMO2); alternate cross-link involves residue Lys281. The DEAD box signature appears at 370–373 (DEAD). Phosphoserine is present on Ser481. In terms of domain architecture, Helicase C-terminal spans 493-681 (KGEYAVRAIK…QVEPDIKVPV (189 aa)). Positions 525–740 (YFMQQGGGPD…YLPNQLFRTF (216 aa)) are necessary for interaction with HNRNPK.

The protein belongs to the DEAD box helicase family. DDX1 subfamily. As to quaternary structure, found in a multi-helicase-TICAM1 complex at least composed of DHX36, DDX1, DDX21 and TICAM1; this complex exists in resting cells with or without poly(I:C) RNA ligand stimulation. Interacts with DHX36. Interacts (via B30.2/SPRY domain) with DDX21 (via N-terminus); this interaction serves as bridges to TICAM1. Interacts with FAM98A (via N- and C-terminus). Interacts with PHF5A (via C-terminus). Interacts with MBNL1. Interacts with CSTF2. Interacts with HNRNPK. Interacts with ATM. Interacts with RELA (via C-terminus). Component of the tRNA-splicing ligase complex. Interacts with PQBP1. Interacts with ERCC6. Phosphorylated by ATM kinase; phosphorylation is increased in response to ionizing radiation (IR).

It is found in the nucleus. The protein resides in the cytoplasm. Its subcellular location is the cytoplasmic granule. It localises to the cytosol. The protein localises to the mitochondrion. The catalysed reaction is ATP + H2O = ADP + phosphate + H(+). In terms of biological role, acts as an ATP-dependent RNA helicase, able to unwind both RNA-RNA and RNA-DNA duplexes. Possesses 5' single-stranded RNA overhang nuclease activity. Possesses ATPase activity on various RNA, but not DNA polynucleotides. May play a role in RNA clearance at DNA double-strand breaks (DSBs), thereby facilitating the template-guided repair of transcriptionally active regions of the genome. Together with RELA, acts as a coactivator to enhance NF-kappa-B-mediated transcriptional activation. Acts as a positive transcriptional regulator of cyclin CCND2 expression. Binds to the cyclin CCND2 promoter region. Associates with chromatin at the NF-kappa-B promoter region via association with RELA. Binds to poly(A) RNA. May be involved in 3'-end cleavage and polyadenylation of pre-mRNAs. Component of the tRNA-splicing ligase complex required to facilitate the enzymatic turnover of catalytic subunit RTCB: together with archease (ZBTB8OS), acts by facilitating the guanylylation of RTCB, a key intermediate step in tRNA ligation. Component of a multi-helicase-TICAM1 complex that acts as a cytoplasmic sensor of viral double-stranded RNA (dsRNA) and plays a role in the activation of a cascade of antiviral responses including the induction of pro-inflammatory cytokines via the adapter molecule TICAM1. Specifically binds (via helicase ATP-binding domain) on both short and long poly(I:C) dsRNA. The chain is ATP-dependent RNA helicase DDX1 (DDX1) from Bos taurus (Bovine).